A 341-amino-acid polypeptide reads, in one-letter code: L-threonine 3-dehydrogenase (341 aa).

Cys38 is a binding site for Zn(2+). Catalysis depends on charge relay system residues Thr40 and His43. The Zn(2+) site is built by His63, Glu64, Cys93, Cys96, Cys99, and Cys107. Residues Ile175, Asp195, Arg200, 262-264, and 286-287 contribute to the NAD(+) site; these read LGI and IY.

This sequence belongs to the zinc-containing alcohol dehydrogenase family. As to quaternary structure, homotetramer. It depends on Zn(2+) as a cofactor.

It is found in the cytoplasm. It carries out the reaction L-threonine + NAD(+) = (2S)-2-amino-3-oxobutanoate + NADH + H(+). Its pathway is amino-acid degradation; L-threonine degradation via oxydo-reductase pathway; glycine from L-threonine: step 1/2. Functionally, catalyzes the NAD(+)-dependent oxidation of L-threonine to 2-amino-3-ketobutyrate. This Shigella dysenteriae serotype 1 (strain Sd197) protein is L-threonine 3-dehydrogenase.